Consider the following 90-residue polypeptide: Signal recognition particle 19 kDa protein (90 aa).

The protein belongs to the SRP19 family. In terms of assembly, part of the signal recognition particle protein translocation system, which is composed of SRP and FtsY. Archaeal SRP consists of a 7S RNA molecule of 300 nucleotides and two protein subunits: SRP54 and SRP19.

The protein localises to the cytoplasm. Functionally, involved in targeting and insertion of nascent membrane proteins into the cytoplasmic membrane. Binds directly to 7S RNA and mediates binding of the 54 kDa subunit of the SRP. In Methanococcus aeolicus (strain ATCC BAA-1280 / DSM 17508 / OCM 812 / Nankai-3), this protein is Signal recognition particle 19 kDa protein.